The chain runs to 895 residues: Protein translocase subunit SecA (895 aa).

ATP is bound by residues Gln-90, 108 to 112, and Asp-498; that span reads GEGKS.

It belongs to the SecA family.

The protein resides in the plastid. The protein localises to the chloroplast stroma. It is found in the chloroplast thylakoid membrane. It carries out the reaction ATP + H2O + cellular proteinSide 1 = ADP + phosphate + cellular proteinSide 2.. Its function is as follows. Has a central role in coupling the hydrolysis of ATP to the transfer of proteins across the thylakoid membrane. In Cyanidium caldarium (Red alga), this protein is Protein translocase subunit SecA.